The following is a 71-amino-acid chain: Small ribosomal subunit protein bS21 (71 aa).

The segment covering 48-59 has biased composition (basic residues); the sequence is KAAAAVKRHAKK. The segment at 48-71 is disordered; it reads KAAAAVKRHAKKVQREQRRRERLY. The span at 60-71 shows a compositional bias: basic and acidic residues; sequence VQREQRRRERLY.

This sequence belongs to the bacterial ribosomal protein bS21 family.

The polypeptide is Small ribosomal subunit protein bS21 (Azotobacter vinelandii (strain DJ / ATCC BAA-1303)).